Reading from the N-terminus, the 276-residue chain is Large ribosomal subunit protein uL2cy (276 aa).

2 disordered regions span residues 1–25 (MAIH…VKSN) and 225–276 (MNPV…RRSK). Over residues 7-25 (KTSTPSTRNGTVDSQVKSN) the composition is skewed to polar residues.

It belongs to the universal ribosomal protein uL2 family. As to quaternary structure, part of the 50S ribosomal subunit.

The protein resides in the plastid. The protein localises to the chloroplast. The polypeptide is Large ribosomal subunit protein uL2cy (rpl2-B) (Coffea arabica (Arabian coffee)).